Reading from the N-terminus, the 979-residue chain is Pheromone-regulated membrane protein 10 (979 aa).

Disordered regions lie at residues 1–279 (MGKS…FFSK), 295–318 (LRNV…EVDG), 337–411 (YSSL…PQRV), 432–451 (FSTA…PLLD), and 491–528 (ATKH…LPKF). Residues 15–26 (GGKDARSPETRS) are compositionally biased toward basic and acidic residues. The segment covering 29–38 (SRSSTDNRSS) has biased composition (low complexity). Acidic residues predominate over residues 54 to 68 (LDLEEGVDDDADFDW). Over residues 77 to 86 (DAQSLDNPFN) the composition is skewed to polar residues. A compositionally biased stretch (basic and acidic residues) spans 105–115 (AIERDAVDTIR). Over residues 122 to 135 (EEPDSASDGEDVGM) the composition is skewed to acidic residues. Composition is skewed to basic and acidic residues over residues 138 to 148 (EYQRKRERLVD) and 158 to 175 (SPRR…HTET). The segment covering 192-213 (EAGTGTNENGEASSSGMKSSIN) has biased composition (polar residues). Positions 253–263 (GAEKGMKSMKD) are enriched in basic and acidic residues. The segment covering 360-372 (SPSTPSSSPGPES) has biased composition (low complexity). Residues 379–395 (DDYDFDQVDSDGEDSDL) are compositionally biased toward acidic residues. Positions 503 to 515 (ASGSNSELPSFKN) are enriched in polar residues. Over residues 516–528 (TRPKKNKKHLPKF) the composition is skewed to basic residues. The next 10 helical transmembrane spans lie at 658-678 (WVCV…AFGG), 680-700 (WVNL…QFIV), 710-730 (VFEI…GSIG), 734-754 (ICFG…YIIL), 773-793 (FYAI…AALF), 809-829 (PISP…ISLI), 832-852 (AHWI…VVTY), 864-884 (FTAS…SRVW), 886-906 (GLAV…GVAS), and 946-966 (ITMI…SLIV).

The protein belongs to the ThrE exporter (TC 2.A.79) family.

The protein resides in the membrane. This is Pheromone-regulated membrane protein 10 from Zygosaccharomyces rouxii (strain ATCC 2623 / CBS 732 / NBRC 1130 / NCYC 568 / NRRL Y-229).